A 318-amino-acid polypeptide reads, in one-letter code: Non-homologous end joining protein Ku (318 aa).

In terms of domain architecture, Ku spans 10–193; it reads AFGLVNVPVK…EVQIKPAELK (184 aa). The tract at residues 259–318 is disordered; the sequence is SVKARKGGKSDSKDDSDSESDSKESKSDSKPAKKAPAKKAAAKKSTAKKAPAKKAAAKKS. Residues 266-289 are compositionally biased toward basic and acidic residues; the sequence is GKSDSKDDSDSESDSKESKSDSKP. The span at 290–318 shows a compositional bias: basic residues; that stretch reads AKKAPAKKAAAKKSTAKKAPAKKAAAKKS.

It belongs to the prokaryotic Ku family. As to quaternary structure, homodimer. Interacts with Sir2 and probably also with LigD; may form a trimeric complex during NHEJ.

With LigD forms a non-homologous end joining (NHEJ) repair enzyme which repairs blunt-end and 5'-overhang double strand breaks (DSB) with about 50% fidelity, and DSB with non-complementary 3' ends. Plays a partial role in NHEJ on 3'-overhang repair of complementary ends. NHEJ repairs DSB with blunt ends and 5' overhangs with a high level of nucleotide insertion/deletion, without a need for microhomology. This protein but not LigD also suppresses homologous recombination. Overexpression dramatically increases the efficiency of NHEJ with no effect on repair fidelity. The protein is Non-homologous end joining protein Ku of Mycolicibacterium smegmatis (strain ATCC 700084 / mc(2)155) (Mycobacterium smegmatis).